A 122-amino-acid polypeptide reads, in one-letter code: Small ribosomal subunit protein uS13 (122 aa).

A compositionally biased stretch (basic residues) spans 97–114; that stretch reads PVRGQRTHTNAKTRKGKS. A disordered region spans residues 97–122; the sequence is PVRGQRTHTNAKTRKGKSRLPIAGKE.

It belongs to the universal ribosomal protein uS13 family. Part of the 30S ribosomal subunit. Forms a loose heterodimer with protein S19. Forms two bridges to the 50S subunit in the 70S ribosome.

Its function is as follows. Located at the top of the head of the 30S subunit, it contacts several helices of the 16S rRNA. In the 70S ribosome it contacts the 23S rRNA (bridge B1a) and protein L5 of the 50S subunit (bridge B1b), connecting the 2 subunits; these bridges are implicated in subunit movement. Contacts the tRNAs in the A and P-sites. This Wolbachia sp. subsp. Brugia malayi (strain TRS) protein is Small ribosomal subunit protein uS13.